Here is a 185-residue protein sequence, read N- to C-terminus: Small ribosomal subunit protein uS4 (185 aa).

An S4 RNA-binding domain is found at 107-179; that stretch reads RRLQTLVYRK…NGRRKRKNNH (73 aa). The interval 161-185 is disordered; sequence NTPLTNPEINGRRKRKNNHAGKEDN.

Belongs to the universal ribosomal protein uS4 family.

The sequence is that of Small ribosomal subunit protein uS4 from Entamoeba histolytica (strain ATCC 30459 / HM-1:IMSS / ABRM).